Reading from the N-terminus, the 370-residue chain is Gap junction delta-4 protein (370 aa).

Residues 1 to 19 (MEGVDLLGFLIITLNCNVT) are Cytoplasmic-facing. A helical transmembrane segment spans residues 20–40 (MXGKLWFVLTMLLRMLVIVLA). Residues 41-76 (GRPVYQDEQERFVCNTLQPGCANVCYDVFSPVSHLR) are Extracellular-facing. A helical membrane pass occupies residues 77-97 (FWLIQGVCVLLPSAVFSVYVL). Topologically, residues 98 to 146 (HRGATLAALGPRRCPEPRDTASGQRRCPGSCRERGGLEVPDFSAGYIIH) are cytoplasmic. A helical membrane pass occupies residues 147-167 (LLLRTLLEAAFGALNYLLFGF). Residues 168-196 (LAPNKFPCTRPPCTGVVDCYVSRPTEKSL) lie on the Extracellular side of the membrane. The helical transmembrane segment at 197–217 (LMLFLWAVSALSFLLGLADLV) threads the bilayer. The Cytoplasmic portion of the chain corresponds to 218–370 (CSLRRLMRRR…HLRARKSEWV (153 aa)). Positions 227–370 (RPGPPTSPSI…HLRARKSEWV (144 aa)) are disordered. Residues 246–260 (PEGRPTDKEGGREQE) show a composition bias toward basic and acidic residues. The segment covering 331-345 (PSAAPSHLAAHPSCS) has biased composition (low complexity).

The protein belongs to the connexin family. Delta-type subfamily. In terms of assembly, a connexon is composed of a hexamer of connexins.

The protein localises to the cell membrane. The protein resides in the cell junction. It is found in the gap junction. Its function is as follows. One gap junction consists of a cluster of closely packed pairs of transmembrane channels, the connexons, through which materials of low MW diffuse from one cell to a neighboring cell. The protein is Gap junction delta-4 protein (GJD4) of Macaca fascicularis (Crab-eating macaque).